The chain runs to 826 residues: Lethal(3)malignant brain tumor-like protein 1 (826 aa).

S136 is modified (phosphoserine). Disordered stretches follow at residues 167-197 (LEPP…SGDR) and 220-271 (LLKP…RSQL). Positions 242–256 (EAVKQGEGKDAEREP) are enriched in basic and acidic residues. MBT repeat units follow at residues 280–380 (WSWE…LQLP), 388–487 (FSWS…LTPP), and 496–591 (FCWE…LEPP). The tract at residues 453-460 (FDDWGDTY) is interaction with monomethylated and dimethylated peptides. The segment at 586-621 (HPLEPPLRPRESSSVSPGGCPPLSHRSPPHTKTSKY) is disordered. Positions 612–621 (SPPHTKTSKY) are enriched in basic residues. The CCHHC-type zinc-finger motif lies at 619-662 (SKYNFHHRKCPTPGCDGSGHVTGKFTAHHCLSGCPLAEKNQSRL). C628, C633, H646, and C652 together coordinate Zn(2+). The disordered stretch occupies residues 663-699 (KAELSDSETAARKKNPSNLSPRKKPRHQGRIGRPPKY). Over residues 683-699 (PRKKPRHQGRIGRPPKY) the composition is skewed to basic residues. Positions 757–821 (WTIEEVFGFV…YNAILMFKNT (65 aa)) constitute an SAM domain.

In terms of assembly, homodimer. Interacts with RB1/RB (when monomethylated at 'Lys-860'). Interacts with p53/TP53 (when monomethylated at 'Lys-382'). Interacts with CBX3, ETV6, KMT5A and VCP/p97. In terms of processing, ubiquitinated in a VCP/p97-dependent way following DNA damage, leading to its removal from DNA damage sites, promoting accessibility of H4K20me2 mark for DNA repair protein TP53BP1, which is then recruited to DNA damage sites. Highly expressed in brain, testis, eyes, and ES cells.

It is found in the nucleus. Functionally, polycomb group (PcG) protein that specifically recognizes and binds mono- and dimethyllysine residues on target proteins, thereby acting as a 'reader' of a network of post-translational modifications. PcG proteins maintain the transcriptionally repressive state of genes: acts as a chromatin compaction factor by recognizing and binding mono- and dimethylated histone H1b/H1-4 at 'Lys-26' (H1bK26me1 and H1bK26me2) and histone H4 at 'Lys-20' (H4K20me1 and H4K20me2), leading to condense chromatin and repress transcription. Recognizes and binds p53/TP53 monomethylated at 'Lys-382', leading to repress p53/TP53-target genes. Also recognizes and binds RB1/RB monomethylated at 'Lys-860'. Participates in the ETV6-mediated repression. Probably plays a role in cell proliferation. Overexpression induces multinucleated cells, suggesting that it is required to accomplish normal mitosis. The polypeptide is Lethal(3)malignant brain tumor-like protein 1 (L3mbtl1) (Mus musculus (Mouse)).